Consider the following 91-residue polypeptide: Molybdopterin synthase sulfur carrier subunit (91 aa).

G91 carries the post-translational modification 1-thioglycine; alternate. G91 carries the glycyl adenylate; alternate modification.

Belongs to the MoaD family. MOCS2A subfamily. Heterotetramer; composed of 2 small (MOCS2A) and 2 large (MOCS2B) subunits. Post-translationally, C-terminal thiocarboxylation occurs in 2 steps, it is first acyl-adenylated (-COAMP) via the hesA/moeB/thiF part of uba4, then thiocarboxylated (-COSH) via the rhodanese domain of uba4.

The protein resides in the cytoplasm. It participates in cofactor biosynthesis; molybdopterin biosynthesis. Its function is as follows. Acts as a sulfur carrier required for molybdopterin biosynthesis. Component of the molybdopterin synthase complex that catalyzes the conversion of precursor Z into molybdopterin by mediating the incorporation of 2 sulfur atoms into precursor Z to generate a dithiolene group. In the complex, serves as sulfur donor by being thiocarboxylated (-COSH) at its C-terminus by uba4. After interaction with MOCS2B, the sulfur is then transferred to precursor Z to form molybdopterin. The chain is Molybdopterin synthase sulfur carrier subunit from Emericella nidulans (strain FGSC A4 / ATCC 38163 / CBS 112.46 / NRRL 194 / M139) (Aspergillus nidulans).